Reading from the N-terminus, the 342-residue chain is Deoxyhypusine synthase regulatory subunit (342 aa).

NAD(+) is bound by residues 72 to 76, 98 to 100, Glu104, Asp213, 282 to 283, and 316 to 317; these read SNLIS, TAG, TG, and DA.

The protein belongs to the deoxyhypusine synthase family. In terms of assembly, heterotetramer formed by a homodimer of the non-catalytic regulatory subunit DHSp and a homodimer of the catalytic subunit DHSc where DHSc appears to bind spermidine and DHSp appears to bind NAD(+).

It participates in protein modification; eIF5A hypusination. In terms of biological role, required for the activation and stability of deoxyhypusine synthase DHSc. Required for cell growth and survival. This is Deoxyhypusine synthase regulatory subunit from Trypanosoma brucei brucei (strain 927/4 GUTat10.1).